The following is an 808-amino-acid chain: Protein tortoise (808 aa).

A coiled-coil region spans residues 43–78 (KDRKELYSLNNDSIKKKLNQLKDETNQLLKERGEEL). The disordered stretch occupies residues 152 to 171 (LTSGGANKKKSPFLEDNNNK). A coiled-coil region spans residues 694 to 733 (EDLDFQIEELELMIKNKKILEREIKAHNEKISKIIKDSRD).

It localises to the mitochondrion. Functionally, required for efficient chemotaxis. This chain is Protein tortoise (torA), found in Dictyostelium discoideum (Social amoeba).